The following is a 75-amino-acid chain: MCLICVLGEYIMTQREKDNNIKRVQVTFTKSQWELIENFRGILGQTDAEIVRTIVLTWLSEKSIITTIKKEIGDK.

This is an uncharacterized protein from Methanocaldococcus jannaschii (strain ATCC 43067 / DSM 2661 / JAL-1 / JCM 10045 / NBRC 100440) (Methanococcus jannaschii).